Reading from the N-terminus, the 685-residue chain is Protein snwA (685 aa).

Disordered regions lie at residues 1–62, 88–112, 347–573, and 605–685; these read MTSL…GYLP, RKGKSKSSNSNTSNMNGGGTTTSIV, LAED…DSIY, and AVSN…SKKR. Composition is skewed to low complexity over residues 30–41 and 93–102; these read PQQQKQQQQQQQ and KSSNSNTSNM. An SNW region spans residues 194-360; the sequence is ATYIKYTPSN…VRNERSGIIQ (167 aa). Acidic residues predominate over residues 370 to 381; it reads DSDNDNDNDSSS. Basic and acidic residues predominate over residues 399–494; the sequence is RSTERIPSRN…DRYSKRRSDS (96 aa). Residues 495 to 507 are compositionally biased toward acidic residues; sequence DSDSDSDSSDSED. The segment covering 508–556 has biased composition (basic and acidic residues); sequence ERVRRERKEKLERDKIRMEKKRELEREYRLEASGKKSKFNRDQDRDISE. Over residues 618–631 the composition is skewed to polar residues; that stretch reads EDNTSIQDVLSNSR. Basic and acidic residues predominate over residues 646–685; sequence PNKEFSGTDRSKDRTGPVAFEKEKKKSDDPFGFDDFSKKR.

This sequence belongs to the SNW family. Interacts with cypE.

It localises to the nucleus. The polypeptide is Protein snwA (snwA) (Dictyostelium discoideum (Social amoeba)).